The following is a 345-amino-acid chain: MDYKTAGVDVQAGRAFIERIRSSVEATHRPEVIGGLGGFGGLMRLPAGLNKPLLVAGTDGVGTKLELAQQHQAHYGVGLDLVGMCVNDVITSGAEPLFFLDYIATGALSPEAMAQVVEGIAEGCRRSGCALLGGETAEMPGFYDPGCYDLAGFCVAVVEEDEMIDGRKIKPGDQIIGVASSGVHSNGFSLVRKVLALTEANKNTLFGCDNKPLIETLLTPTTLYGQLVKNLLEAKVPLHGMAHITGGGLPENLPRCCPKDLVTVIDPSSWTRPELFQWLQDAGQIPEHDLWHTFNLGVGFCLVVAEEVVSDVLQVCNEQALQAWPIGQVETASPSTGERLRGLPS.

Belongs to the AIR synthase family.

The protein resides in the cytoplasm. The enzyme catalyses 2-formamido-N(1)-(5-O-phospho-beta-D-ribosyl)acetamidine + ATP = 5-amino-1-(5-phospho-beta-D-ribosyl)imidazole + ADP + phosphate + H(+). The protein operates within purine metabolism; IMP biosynthesis via de novo pathway; 5-amino-1-(5-phospho-D-ribosyl)imidazole from N(2)-formyl-N(1)-(5-phospho-D-ribosyl)glycinamide: step 2/2. In Prochlorococcus marinus (strain MIT 9313), this protein is Phosphoribosylformylglycinamidine cyclo-ligase.